The following is a 285-amino-acid chain: 4-diphosphocytidyl-2-C-methyl-D-erythritol kinase (285 aa).

Residue K10 is part of the active site. 93–103 (PIGGGLGGGSS) is an ATP binding site. D135 is a catalytic residue.

It belongs to the GHMP kinase family. IspE subfamily.

It catalyses the reaction 4-CDP-2-C-methyl-D-erythritol + ATP = 4-CDP-2-C-methyl-D-erythritol 2-phosphate + ADP + H(+). It functions in the pathway isoprenoid biosynthesis; isopentenyl diphosphate biosynthesis via DXP pathway; isopentenyl diphosphate from 1-deoxy-D-xylulose 5-phosphate: step 3/6. In terms of biological role, catalyzes the phosphorylation of the position 2 hydroxy group of 4-diphosphocytidyl-2C-methyl-D-erythritol. The protein is 4-diphosphocytidyl-2-C-methyl-D-erythritol kinase of Ruthia magnifica subsp. Calyptogena magnifica.